The primary structure comprises 865 residues: Prominin-1 (865 aa).

The first 19 residues, 1-19 (MALVLGSLLLLGLCGNSFS), serve as a signal peptide directing secretion. Residues 20–108 (GGQPSSTDAP…GLKIVYYEAG (89 aa)) are Extracellular-facing. Residues 109–129 (IILCCVLGLLFIILMPLVGYF) form a helical membrane-spanning segment. At 130–157 (FCMCRCCNKCGGEMHQRQKENGPFLRKC) the chain is on the cytoplasmic side. A helical membrane pass occupies residues 158–178 (FAISLLVICIIISIGIFYGFV). The Extracellular segment spans residues 179 to 433 (ANHQVRTRIK…LPTLEEYDSY (255 aa)). N-linked (GlcNAc...) asparagine glycosylation occurs at N220. K225, K257, and K264 each carry N6-acetyllysine. 3 N-linked (GlcNAc...) asparagine glycosylation sites follow: N274, N395, and N414. The helical transmembrane segment at 434–454 (WWLGGLVICSLLTLIVIFYYL) threads the bilayer. At 455–486 (GLLCGVCGYDRHATPTTRGCVSNTGGVFLMVG) the chain is on the cytoplasmic side. Residues 487-507 (VGLSFLFCWILMIIVVLTFVF) traverse the membrane as a helical segment. Residues 508 to 792 (GANVEKLICE…LCSYIIDPLN (285 aa)) lie on the Extracellular side of the membrane. N-linked (GlcNAc...) asparagine glycosylation is found at N548, N580, N729, and N730. The helical transmembrane segment at 793 to 813 (LFWFGIGKATVFLLPALIFAV) threads the bilayer. At 814 to 865 (KLAKYYRRMDSEDVYDDVETIPMKNMENGNNGYHKDHVYGIHNPVMTSPSQH) the chain is on the cytoplasmic side. S863 bears the Phosphoserine mark.

The protein belongs to the prominin family. As to quaternary structure, interacts with CDHR1 and with actin filaments. Interacts with NAT8 and NAT8B. Isoform 1 and isoform 2 are glycosylated. In terms of processing, acetylation at Lys-225, Lys-257 and Lys-264 by NAT8 and NAT8B may control PROM1 protein expression and its function in cell apoptosis. Isoform 1 is selectively expressed on CD34 hematopoietic stem and progenitor cells in adult and fetal bone marrow, fetal liver, cord blood and adult peripheral blood. Isoform 1 is not detected on other blood cells. Isoform 1 is also expressed in a number of non-lymphoid tissues including retina, pancreas, placenta, kidney, liver, lung, brain and heart. Found in saliva within small membrane particles. Isoform 2 is predominantly expressed in fetal liver, skeletal muscle, kidney, and heart as well as adult pancreas, kidney, liver, lung, and placenta. Isoform 2 is highly expressed in fetal liver, low in bone marrow, and barely detectable in peripheral blood. Isoform 2 is expressed on hematopoietic stem cells and in epidermal basal cells (at protein level). Expressed in adult retina by rod and cone photoreceptor cells (at protein level).

It is found in the apical cell membrane. The protein localises to the cell projection. The protein resides in the microvillus membrane. It localises to the cilium. Its subcellular location is the photoreceptor outer segment. It is found in the endoplasmic reticulum. The protein localises to the endoplasmic reticulum-Golgi intermediate compartment. Its function is as follows. May play a role in cell differentiation, proliferation and apoptosis. Binds cholesterol in cholesterol-containing plasma membrane microdomains and may play a role in the organization of the apical plasma membrane in epithelial cells. During early retinal development acts as a key regulator of disk morphogenesis. Involved in regulation of MAPK and Akt signaling pathways. In neuroblastoma cells suppresses cell differentiation such as neurite outgrowth in a RET-dependent manner. This Homo sapiens (Human) protein is Prominin-1 (PROM1).